A 98-amino-acid polypeptide reads, in one-letter code: NADH-ubiquinone oxidoreductase chain 4L (98 aa).

3 consecutive transmembrane segments (helical) span residues 1 to 21 (MTPIQFTFSSAFLLGLSGLAF), 26 to 46 (LLSALLCLEGMMLSLFIALSL), and 59 to 79 (APMLLLAFSACEASVGLALMV).

Belongs to the complex I subunit 4L family.

Its subcellular location is the mitochondrion membrane. The catalysed reaction is a ubiquinone + NADH + 5 H(+)(in) = a ubiquinol + NAD(+) + 4 H(+)(out). Its function is as follows. Core subunit of the mitochondrial membrane respiratory chain NADH dehydrogenase (Complex I) which catalyzes electron transfer from NADH through the respiratory chain, using ubiquinone as an electron acceptor. Part of the enzyme membrane arm which is embedded in the lipid bilayer and involved in proton translocation. The polypeptide is NADH-ubiquinone oxidoreductase chain 4L (MT-ND4L) (Tetraodon nigroviridis (Spotted green pufferfish)).